Consider the following 1194-residue polypeptide: ATP-dependent RNA helicase DHX30 (1194 aa).

Residues 1 to 10 (MFSLDSFRKD) show a composition bias toward basic and acidic residues. The interval 1 to 27 (MFSLDSFRKDRAQHRQRQCKLPPPRLP) is disordered. Phosphoserine is present on Ser-6. The DRBM domain maps to 53 to 121 (PKNLLNSVIG…QAAAAACQLF (69 aa)). The segment at 150–199 (ADSWWRPEPTMPPTSWRQLNPESIRPGGPGGLSRSLGREEEEDEEEELEE) is disordered. Over residues 188–199 (EEEEDEEEELEE) the composition is skewed to acidic residues. Phosphoserine occurs at positions 226 and 380. The Helicase ATP-binding domain occupies 444-612 (LNAIEQHPVV…FGGCPVIKVP (169 aa)). ATP is bound at residue 457–464 (GDTGCGKT). Positions 559-562 (DEVH) match the DEAH box motif. Residues 654 to 827 (LVTDLVLHID…NLVLQAKIHM (174 aa)) form the Helicase C-terminal domain.

The protein belongs to the DEAD box helicase family. DEAH subfamily. Identified in a complex with TFAM and SSBP1. Interacts (via N-terminus) with ZC3HAV1 (via N-terminal domain) in an RNA-independent manner. Found in a complex with GRSF1, DDX28, FASTKD2 and FASTKD5.

Its subcellular location is the cytoplasm. The protein localises to the mitochondrion. It is found in the mitochondrion matrix. The protein resides in the mitochondrion nucleoid. It carries out the reaction ATP + H2O = ADP + phosphate + H(+). RNA-dependent helicase. Plays an important role in the assembly of the mitochondrial large ribosomal subunit. Required for optimal function of the zinc-finger antiviral protein ZC3HAV1. Associates with mitochondrial DNA. Involved in nervous system development and differentiation through its involvement in the up-regulation of a number of genes which are required for neurogenesis, including GSC, NCAM1, neurogenin, and NEUROD. This Pongo abelii (Sumatran orangutan) protein is ATP-dependent RNA helicase DHX30 (DHX30).